A 115-amino-acid polypeptide reads, in one-letter code: NADH-ubiquinone oxidoreductase chain 3 (115 aa).

Transmembrane regions (helical) follow at residues 4–24 (LTAL…AFWL), 55–75 (FFLV…LLPL), and 83–103 (YINI…LGLA).

This sequence belongs to the complex I subunit 3 family. As to quaternary structure, core subunit of respiratory chain NADH dehydrogenase (Complex I) which is composed of 45 different subunits. Interacts with TMEM186. Interacts with TMEM242.

It is found in the mitochondrion inner membrane. It carries out the reaction a ubiquinone + NADH + 5 H(+)(in) = a ubiquinol + NAD(+) + 4 H(+)(out). Core subunit of the mitochondrial membrane respiratory chain NADH dehydrogenase (Complex I) which catalyzes electron transfer from NADH through the respiratory chain, using ubiquinone as an electron acceptor. Essential for the catalytic activity of complex I. The sequence is that of NADH-ubiquinone oxidoreductase chain 3 from Peromyscus polionotus (Oldfield mouse).